The chain runs to 72 residues: Penaeidin-2a (72 aa).

An N-terminal signal peptide occupies residues 1–21; it reads MRLVVCLVFLASFALVCQGEA. Cystine bridges form between Cys-45–Cys-59, Cys-48–Cys-66, and Cys-60–Cys-67. Lys-71 carries the post-translational modification Lysine amide.

In terms of tissue distribution, higher expression in hemocytes and to a lesser extent in heart, testis, gills, intestine, lymphoid organ and hepatopancreas. Traces in eyes and subcuticular epithelium. Not present in the brain.

It localises to the cytoplasmic granule. Its function is as follows. Antibacterial activity against M.luteus and E.coli bacteria. Antifungal activity against N.crassa and F.oxysporum. Presents chitin-binding activity. This is Penaeidin-2a from Penaeus vannamei (Whiteleg shrimp).